The following is a 669-amino-acid chain: Acetolactate synthase, mitochondrial (669 aa).

Residues 1 to 140 (MTVLAPLRRL…PRHEQAAGHA (140 aa)) constitute a mitochondrion transit peptide. Glu134 contacts thiamine diphosphate. Residues Arg236, 351–372 (HGSGYANMAMQEADLILALGVR), and 403–422 (DISPKNIGKVVQPTEAIEGD) contribute to the FAD site. The segment at 497-577 (AHQMWAATFY…VKILILNNEE (81 aa)) is thiamine pyrophosphate binding. Residues Asp548 and Asn575 each contribute to the Mg(2+) site.

The protein belongs to the TPP enzyme family. Requires Mg(2+) as cofactor. Thiamine diphosphate serves as cofactor.

It is found in the mitochondrion. It carries out the reaction 2 pyruvate + H(+) = (2S)-2-acetolactate + CO2. The protein operates within amino-acid biosynthesis; L-isoleucine biosynthesis; L-isoleucine from 2-oxobutanoate: step 1/4. Its pathway is amino-acid biosynthesis; L-valine biosynthesis; L-valine from pyruvate: step 1/4. This chain is Acetolactate synthase, mitochondrial (ilv1), found in Schizosaccharomyces pombe (strain 972 / ATCC 24843) (Fission yeast).